The following is a 341-amino-acid chain: D-aspartate oxidase (341 aa).

Residue methionine 1 is modified to Blocked amino end (Met). FAD-binding residues include aspartate 36, lysine 37, threonine 43, serine 44, methionine 50, glycine 307, and isoleucine 311. A Microbody targeting signal motif is present at residues 339–341 (SKL).

It belongs to the DAMOX/DASOX family. In terms of assembly, monomer. Interacts with PEX5; the interaction is direct and required for localization of DDO to the peroxisome. FAD serves as cofactor. As to expression, in the kidney, expressed in epithelial cells of the proximal tubules and in the liver (at protein level).

The protein localises to the peroxisome matrix. It localises to the cytoplasm. It is found in the cytosol. The catalysed reaction is D-aspartate + O2 + H2O = oxaloacetate + H2O2 + NH4(+). It catalyses the reaction D-glutamate + O2 + H2O = H2O2 + 2-oxoglutarate + NH4(+). With respect to regulation, inhibited by phenylglyoxal; chemical modification of arginine residues in the enzyme with phenylglyoxal leads to the irreversible loss of activity towards dicarboxylic D-amino acids, paralleled by a transient appearance of activity versus monocarboxylic ones. Functionally, selectively catalyzes the oxidative deamination of acidic amino acids. Suppresses the level of D-aspartate in the brain, an amino acid that can act as an agonist for glutamate receptors. Protects the organism from the toxicity of D-amino acids. May also function in the intestine. The protein is D-aspartate oxidase (DDO) of Bos taurus (Bovine).